We begin with the raw amino-acid sequence, 600 residues long: UvrABC system protein C (600 aa).

One can recognise a GIY-YIG domain in the interval 15–100; the sequence is NSAGVYQYFN…IKQLHPKYNI (86 aa). Residues 203-238 form the UVR domain; sequence SILIKNLEKQMLVLAQNENYEEAAKVRDQIVTIKDL.

This sequence belongs to the UvrC family. In terms of assembly, interacts with UvrB in an incision complex.

The protein resides in the cytoplasm. In terms of biological role, the UvrABC repair system catalyzes the recognition and processing of DNA lesions. UvrC both incises the 5' and 3' sides of the lesion. The N-terminal half is responsible for the 3' incision and the C-terminal half is responsible for the 5' incision. This chain is UvrABC system protein C, found in Campylobacter jejuni subsp. jejuni serotype O:6 (strain 81116 / NCTC 11828).